The sequence spans 273 residues: Vitamin B12-binding protein (273 aa).

Residues methionine 1–alanine 18 form the signal peptide. A Fe/B12 periplasmic-binding domain is found at arginine 23 to arginine 273. Cysteine 183 and cysteine 263 form a disulfide bridge.

It belongs to the BtuF family. The complex is composed of two ATP-binding proteins (BtuD), two transmembrane proteins (BtuC) and a solute-binding protein (BtuF).

The protein localises to the periplasm. In terms of biological role, part of the ABC transporter complex BtuCDF involved in vitamin B12 import. Binds vitamin B12 and delivers it to the periplasmic surface of BtuC. The polypeptide is Vitamin B12-binding protein (Vibrio vulnificus (strain YJ016)).